The following is a 160-amino-acid chain: tRNA (cytidine(34)-2'-O)-methyltransferase (160 aa).

The S-adenosyl-L-methionine site is built by Leu-78, Gly-100, Ile-120, and Ser-128.

The protein belongs to the class IV-like SAM-binding methyltransferase superfamily. RNA methyltransferase TrmH family. TrmL subfamily. As to quaternary structure, homodimer.

The protein resides in the cytoplasm. The catalysed reaction is cytidine(34) in tRNA + S-adenosyl-L-methionine = 2'-O-methylcytidine(34) in tRNA + S-adenosyl-L-homocysteine + H(+). The enzyme catalyses 5-carboxymethylaminomethyluridine(34) in tRNA(Leu) + S-adenosyl-L-methionine = 5-carboxymethylaminomethyl-2'-O-methyluridine(34) in tRNA(Leu) + S-adenosyl-L-homocysteine + H(+). Its function is as follows. Methylates the ribose at the nucleotide 34 wobble position in the two leucyl isoacceptors tRNA(Leu)(CmAA) and tRNA(Leu)(cmnm5UmAA). Catalyzes the methyl transfer from S-adenosyl-L-methionine to the 2'-OH of the wobble nucleotide. The chain is tRNA (cytidine(34)-2'-O)-methyltransferase from Beijerinckia indica subsp. indica (strain ATCC 9039 / DSM 1715 / NCIMB 8712).